The sequence spans 256 residues: MVLIKVLANLLVLQLSYAQKSSELVVGGDECNINEHRSLVFLYNNSFGCSGTLINQQWVLSAVHCDMENVRIYLGVHNLTLRNNAEIRLPEERFFCLSNKNYTKWDKDIMLIKLDRPVKTSTYIAPLSLPSSPPRVGSVCRIMGWGAITSPNETFPGVTHCANINILPYSVCRAAYKGLPAQSRTLCGGILEGGIGSCMGDSGGPLICNGEMHGIVAWGDDTCAQPHKPVHYTKVYDYTDWIQSIIAGNTAATCPP.

The first 18 residues, 1 to 18 (MVLIKVLANLLVLQLSYA), serve as a signal peptide directing secretion. Positions 19-24 (QKSSEL) are excised as a propeptide. In terms of domain architecture, Peptidase S1 spans 25-247 (VVGGDECNIN…YTDWIQSIIA (223 aa)). 6 disulfide bridges follow: Cys-31–Cys-161, Cys-49–Cys-65, Cys-96–Cys-254, Cys-140–Cys-208, Cys-172–Cys-187, and Cys-198–Cys-223. Residue Asn-44 is glycosylated (N-linked (GlcNAc...) asparagine). Residue His-64 is the Charge relay system of the active site. N-linked (GlcNAc...) asparagine glycosylation is found at Asn-78 and Asn-101. Asp-108 functions as the Charge relay system in the catalytic mechanism. The N-linked (GlcNAc...) asparagine glycan is linked to Asn-152. Catalysis depends on Ser-202, which acts as the Charge relay system.

It belongs to the peptidase S1 family. Snake venom subfamily. Monomer. Expressed by the venom gland.

Its subcellular location is the secreted. In terms of biological role, snake venom serine protease that has fibrinogenolytic activities by hydrolyzing the beta chain of fibrinogen (FGB). Typical arginine esterase which hydrolyzes esters and amides of arginine. The sequence is that of Beta-fibrinogenase-like from Daboia siamensis (Eastern Russel's viper).